The sequence spans 519 residues: Galactan beta-1,4-galactosyltransferase GALS2 (519 aa).

A helical transmembrane segment spans residues 28 to 48; that stretch reads LALMALLVLCTLATLLPFLPS. The GT92 domain occupies 257 to 471; the sequence is DYLYCGSSLY…YHGSISQRRE (215 aa).

The protein belongs to the glycosyltransferase 92 family. As to expression, expressed in the midrib of mature leaves, root vasculature, flower filaments, siliques and seeds.

The protein resides in the golgi apparatus membrane. In terms of biological role, involved in the biosynthesis of beta-1,4-galactan. Beta-1,4-galactans are abundant polysaccharides in plant cell walls and are found as side-chain of rhamnogalacturonan I, which is a major component of pectin. The polypeptide is Galactan beta-1,4-galactosyltransferase GALS2 (Arabidopsis thaliana (Mouse-ear cress)).